Reading from the N-terminus, the 307-residue chain is Fructokinase (307 aa).

This sequence belongs to the carbohydrate kinase PfkB family.

It carries out the reaction D-fructose + ATP = D-fructose 6-phosphate + ADP + H(+). The chain is Fructokinase (scrK) from Salmonella typhimurium.